The primary structure comprises 302 residues: tRNA pseudouridine synthase B (302 aa).

The active-site Nucleophile is aspartate 45.

Belongs to the pseudouridine synthase TruB family. Type 1 subfamily.

It catalyses the reaction uridine(55) in tRNA = pseudouridine(55) in tRNA. Its function is as follows. Responsible for synthesis of pseudouridine from uracil-55 in the psi GC loop of transfer RNAs. The sequence is that of tRNA pseudouridine synthase B from Francisella philomiragia subsp. philomiragia (strain ATCC 25017 / CCUG 19701 / FSC 153 / O#319-036).